Reading from the N-terminus, the 572-residue chain is Probable catabolite repression protein creC (572 aa).

Positions 36–61 are disordered; that stretch reads HLATPPPHPSEAPVVNPNPLATVPTP. WD repeat units follow at residues 226 to 266, 306 to 347, 348 to 387, and 390 to 434; these read VSNS…ALFT, LANQ…DIFR, SYYG…IVAR, and GHNS…LHRP. Disordered stretches follow at residues 458–486 and 541–572; these read HRAD…SAVR and NDSY…MGSL. The stretch at 506-543 is one WD 5 repeat; sequence VGDDPICWLGFQEDSIMTSSLEGHIRTWDRPREGINDS. Over residues 549 to 572 the composition is skewed to low complexity; it reads SSPAISTSAAGSGSGIADSAMGSL.

The protein belongs to the WD repeat creC family. As to quaternary structure, interacts with creB.

Its function is as follows. Component of the regulatory network controlling carbon source utilization through ubiquitination and deubiquitination involving creA, creB, creC, creD and acrB. Required to prevent the proteolysis of the CreB deubiquitinating enzyme in the absence of carbon catabolite repression. CreB deubiquitinating enzyme stabilized in a complex with the CreC leads to the expression of genes such as those in the proline and quinate pathways. In Aspergillus flavus (strain ATCC 200026 / FGSC A1120 / IAM 13836 / NRRL 3357 / JCM 12722 / SRRC 167), this protein is Probable catabolite repression protein creC (creC).